An 83-amino-acid polypeptide reads, in one-letter code: Apolipoprotein C-I, acidic form (83 aa).

Positions 1–26 are cleaved as a signal peptide; sequence MRLFLSLPVLVVVLSIVLEGPAPAQG.

This sequence belongs to the apolipoprotein C1 family.

It localises to the secreted. The polypeptide is Apolipoprotein C-I, acidic form (APOC1A) (Pan paniscus (Pygmy chimpanzee)).